The following is a 574-amino-acid chain: uncharacterized protein (574 aa).

Positions 297–327 (STASKSKKRRKDEVSGAQRNSSPLPQDAVSS) are disordered. Over residues 313–327 (AQRNSSPLPQDAVSS) the composition is skewed to polar residues.

This is an uncharacterized protein from Macaca fascicularis (Crab-eating macaque).